A 335-amino-acid chain; its full sequence is UPF0324 membrane protein gbs1193 (335 aa).

The next 9 membrane-spanning stretches (helical) occupy residues 20–42, 57–79, 84–106, 116–138, 151–173, 210–232, 253–275, 285–304, and 311–333; these read SWLL…IGII, IAFT…LNLM, VGIS…AYVL, IATL…TAPV, SVIF…FIGL, GATI…LSIY, VLYF…SLRI, FFIV…SKLI, and ILLG…AILG.

This sequence belongs to the UPF0324 family.

The protein localises to the cell membrane. In Streptococcus agalactiae serotype III (strain NEM316), this protein is UPF0324 membrane protein gbs1193.